The chain runs to 373 residues: GTPase Obg (373 aa).

The Obg domain maps to 1–158 (MFVDSVELLI…KQVRLEMKLI (158 aa)). Positions 62-83 (NHIKAENGRPGEGRKKYGRKGQ) are disordered. Basic and acidic residues predominate over residues 64–76 (IKAENGRPGEGRK). In terms of domain architecture, OBG-type G spans 159–362 (ADVGLVGYPN…LRYALGDFVK (204 aa)). GTP contacts are provided by residues 165–172 (GYPNVGKS), 190–194 (FTTLT), 212–215 (DIPG), 280–283 (TKID), and 343–345 (SSV). Mg(2+)-binding residues include Ser-172 and Thr-192.

It belongs to the TRAFAC class OBG-HflX-like GTPase superfamily. OBG GTPase family. As to quaternary structure, monomer. Requires Mg(2+) as cofactor.

The protein resides in the cytoplasm. In terms of biological role, an essential GTPase which binds GTP, GDP and possibly (p)ppGpp with moderate affinity, with high nucleotide exchange rates and a fairly low GTP hydrolysis rate. Plays a role in control of the cell cycle, stress response, ribosome biogenesis and in those bacteria that undergo differentiation, in morphogenesis control. This chain is GTPase Obg, found in Sulfurovum sp. (strain NBC37-1).